The following is a 743-amino-acid chain: 1,4-alpha-glucan branching enzyme GlgB (743 aa).

D416 acts as the Nucleophile in catalysis. E469 serves as the catalytic Proton donor.

Belongs to the glycosyl hydrolase 13 family. GlgB subfamily. Monomer.

The enzyme catalyses Transfers a segment of a (1-&gt;4)-alpha-D-glucan chain to a primary hydroxy group in a similar glucan chain.. It participates in glycan biosynthesis; glycogen biosynthesis. Catalyzes the formation of the alpha-1,6-glucosidic linkages in glycogen by scission of a 1,4-alpha-linked oligosaccharide from growing alpha-1,4-glucan chains and the subsequent attachment of the oligosaccharide to the alpha-1,6 position. The sequence is that of 1,4-alpha-glucan branching enzyme GlgB from Shewanella baltica (strain OS185).